Reading from the N-terminus, the 219-residue chain is Thiopurine S-methyltransferase (219 aa).

Tryptophan 10, leucine 45, glutamate 66, and arginine 123 together coordinate S-adenosyl-L-methionine.

This sequence belongs to the class I-like SAM-binding methyltransferase superfamily. TPMT family.

The protein resides in the cytoplasm. The catalysed reaction is S-adenosyl-L-methionine + a thiopurine = S-adenosyl-L-homocysteine + a thiopurine S-methylether.. This is Thiopurine S-methyltransferase from Shewanella frigidimarina (strain NCIMB 400).